The primary structure comprises 810 residues: Plasminogen (810 aa).

Residues 1–19 (MEHKEVVLLLLLFLKSGQG) form the signal peptide. The 79-residue stretch at 20 to 98 (EPLDDYVNTQ…RDVVLFEKKV (79 aa)) folds into the PAN domain. Disulfide bonds link Cys49/Cys73, Cys53/Cys61, Cys103/Cys181, Cys124/Cys164, Cys152/Cys176, Cys185/Cys262, Cys188/Cys316, Cys206/Cys245, Cys234/Cys257, Cys275/Cys352, Cys296/Cys335, and Cys324/Cys347. Kringle domains are found at residues 103–181 (CKTG…ILEC) and 184–262 (ECMH…IPRC). The tract at residues 126-145 (KWSSTSPHRPRFSPATHPSE) is disordered. L-lysine is bound by residues Arg136, Asp158, and Arg172. A glycan (O-linked (GalNAc...) serine) is linked at Ser268. Positions 275-352 (CLKGTGENYR…RWEYCKIPSC (78 aa)) constitute a Kringle 3 domain. The N-linked (GlcNAc...) asparagine glycan is linked to Asn308. Residue Thr365 is glycosylated (O-linked (GalNAc...) threonine). 9 disulfides stabilise this stretch: Cys377–Cys454, Cys398–Cys437, Cys426–Cys449, Cys481–Cys560, Cys502–Cys543, Cys531–Cys555, Cys567–Cys685, Cys577–Cys585, and Cys607–Cys623. Kringle domains follow at residues 377–454 (CYHG…LKKC) and 481–560 (CMFG…VPQC). Residues 396-416 (KKCQSWSSMTPHRHQKTPENY) are disordered. Residues Asp432 and Arg445 each coordinate L-lysine. The Peptidase S1 domain maps to 581–808 (VVGGCVAHPH…FVTWIEGVMR (228 aa)). The residue at position 597 (Ser597) is a Phosphoserine. Residues His622 and Asp665 each act as charge relay system in the active site. Ser688 bears the Phosphoserine mark. Disulfide bonds link Cys699/Cys766, Cys729/Cys745, and Cys756/Cys784. The Charge relay system role is filled by Ser760.

Belongs to the peptidase S1 family. Plasminogen subfamily. As to quaternary structure, interacts (both mature PLG and the angiostatin peptide) with CSPG4 and AMOT. Interacts (via the Kringle domains) with HRG; the interaction tethers PLG to the cell surface and enhances its activation. Interacts (via Kringle 4 domain) with ADA; the interaction stimulates PLG activation when in complex with DPP4. Angiostatin: Interacts with ATP5F1A; the interaction inhibits most of the angiogenic effects of angiostatin. Interacts (plasmin) with iripin-8, a serine protease inhibitor from Ixodes ricinus saliva. Interacts (plasmin) with iripin-1, a serine protease inhibitor from Ixodes ricinus saliva. Interacts (plasmin) with Kazal-type trypsin inhibitor, a serine protease inhibitor from Aedes aegypti. In terms of assembly, (Microbial infection) Interacts with C.albicans GPD2; the interaction is direct and provides active plasmin on the surface of fungal cells. (Microbial infection) Interacts with Staphylococcus aureus protein FnbB; this interaction provides active plasmin on the surface of bacterial cells. As to quaternary structure, (Microbial infection) Interacts with P.falciparum (strain NF54) enolase ENO (via DKSLVK motif); the interaction occurs at the ookinete cell surface and is required for ookinete invasion of the mosquito midgut. In terms of assembly, (Microbial infection) Interacts with B.burgdorferi OspC. Post-translationally, N-linked glycan contains N-acetyllactosamine and sialic acid. O-linked glycans consist of Gal-GalNAc disaccharide modified with up to 2 sialic acid residues (microheterogeneity). In the presence of the inhibitor, the activation involves only cleavage after Arg-580, yielding two chains held together by two disulfide bonds. In the absence of the inhibitor, the activation involves additionally the removal of the activation peptide. In terms of processing, (Microbial infection) The Y.pestis Pla protein cleaves between Arg-580 and Val-581, generating plasmin which facilitates bacterial migration and infection. Present in plasma and many other extracellular fluids. It is synthesized in the liver.

It is found in the secreted. It catalyses the reaction Preferential cleavage: Lys-|-Xaa &gt; Arg-|-Xaa, higher selectivity than trypsin. Converts fibrin into soluble products.. Converted into plasmin by plasminogen activators, both plasminogen and its activator being bound to fibrin. Activated with catalytic amounts of streptokinase. Plasmin activity inhibited by SERPINE2. Functionally, plasmin dissolves the fibrin of blood clots and acts as a proteolytic factor in a variety of other processes including embryonic development, tissue remodeling, tumor invasion, and inflammation. In ovulation, weakens the walls of the Graafian follicle. It activates the urokinase-type plasminogen activator, collagenases and several complement zymogens, such as C1, C4 and C5. Cleavage of fibronectin and laminin leads to cell detachment and apoptosis. Also cleaves fibrin, thrombospondin and von Willebrand factor. Its role in tissue remodeling and tumor invasion may be modulated by CSPG4. Binds to cells. Its function is as follows. Angiostatin is an angiogenesis inhibitor that blocks neovascularization and growth of experimental primary and metastatic tumors in vivo. In terms of biological role, (Microbial infection) ENO/enoloase from parasite P.falciparum (strain NF54) interacts with PLG present in the mosquito blood meal to promote the invasion of the mosquito midgut by the parasite ookinete. The catalytic active form, plasmin, is essential for the invasion of the mosquito midgut. (Microbial infection) Binds to OspC on the surface of B.burgdorferi cells, possibly conferring an extracellular protease activity on the bacteria that allows it to traverse host tissue. Functionally, (Microbial infection) Interacts with dengue virus type 2 particles. Enhances dengue virus type 2 infection in Aedes aegypti mosquito midgut by increasing midgut internalization, resulting in higher infection rates and viral dissemination in mosquitoes. The chain is Plasminogen (PLG) from Homo sapiens (Human).